Reading from the N-terminus, the 64-residue chain is Large ribosomal subunit protein bL35 (64 aa).

It belongs to the bacterial ribosomal protein bL35 family.

The protein is Large ribosomal subunit protein bL35 of Streptomyces coelicolor (strain ATCC BAA-471 / A3(2) / M145).